A 460-amino-acid chain; its full sequence is GTPase Der (460 aa).

2 consecutive EngA-type G domains span residues 2–164 and 199–370; these read KKVI…DDEI and IKVG…ANFT. GTP contacts are provided by residues 8 to 15, 55 to 59, 116 to 119, 205 to 212, 252 to 256, and 316 to 319; these read GRPNVGKS, DSGGL, NKID, GRVNVGKS, DTAGI, and NKWD. In terms of domain architecture, KH-like spans 371–454; that stretch reads QKIATSKLND…PVILLPRKRG (84 aa).

It belongs to the TRAFAC class TrmE-Era-EngA-EngB-Septin-like GTPase superfamily. EngA (Der) GTPase family. Associates with the 50S ribosomal subunit.

Its function is as follows. GTPase that plays an essential role in the late steps of ribosome biogenesis. The polypeptide is GTPase Der (Campylobacter hominis (strain ATCC BAA-381 / DSM 21671 / CCUG 45161 / LMG 19568 / NCTC 13146 / CH001A)).